A 92-amino-acid polypeptide reads, in one-letter code: Small ribosomal subunit protein uS19c (92 aa).

Belongs to the universal ribosomal protein uS19 family.

Its subcellular location is the plastid. The protein localises to the chloroplast. Its function is as follows. Protein S19 forms a complex with S13 that binds strongly to the 16S ribosomal RNA. This is Small ribosomal subunit protein uS19c from Phalaenopsis aphrodite subsp. formosana (Moth orchid).